A 206-amino-acid polypeptide reads, in one-letter code: Pyridoxine/pyridoxamine 5'-phosphate oxidase (206 aa).

Residues 53-58, 68-69, lysine 75, and glutamine 97 each bind FMN; these read RMVLLK and YT. Lysine 58 lines the substrate pocket. The substrate site is built by tyrosine 115, arginine 119, and serine 123. Residues 132-133 and tryptophan 177 contribute to the FMN site; that span reads QS. 183–185 contacts substrate; the sequence is RLH. Position 187 (arginine 187) interacts with FMN.

It belongs to the pyridoxamine 5'-phosphate oxidase family. As to quaternary structure, homodimer. It depends on FMN as a cofactor.

It catalyses the reaction pyridoxamine 5'-phosphate + O2 + H2O = pyridoxal 5'-phosphate + H2O2 + NH4(+). The enzyme catalyses pyridoxine 5'-phosphate + O2 = pyridoxal 5'-phosphate + H2O2. It functions in the pathway cofactor metabolism; pyridoxal 5'-phosphate salvage; pyridoxal 5'-phosphate from pyridoxamine 5'-phosphate: step 1/1. The protein operates within cofactor metabolism; pyridoxal 5'-phosphate salvage; pyridoxal 5'-phosphate from pyridoxine 5'-phosphate: step 1/1. In terms of biological role, catalyzes the oxidation of either pyridoxine 5'-phosphate (PNP) or pyridoxamine 5'-phosphate (PMP) into pyridoxal 5'-phosphate (PLP). The chain is Pyridoxine/pyridoxamine 5'-phosphate oxidase from Rhizobium etli (strain ATCC 51251 / DSM 11541 / JCM 21823 / NBRC 15573 / CFN 42).